A 434-amino-acid chain; its full sequence is Protein TolB homolog (434 aa).

A signal peptide spans 1 to 27 (MRSTRNSFACLCIMLFGMLFVPFTLRA). The segment at 413-434 (SNQRPLLNMQGEQQQPSWSVSK) is disordered.

This sequence belongs to the TolB family.

It localises to the periplasm. In Chlorobaculum tepidum (strain ATCC 49652 / DSM 12025 / NBRC 103806 / TLS) (Chlorobium tepidum), this protein is Protein TolB homolog.